A 328-amino-acid polypeptide reads, in one-letter code: Probable transcription factor At4g00610 (328 aa).

The interval 31 to 143 (AKNKTLVTPS…ERAKTETETG (113 aa)) is disordered. The segment covering 35 to 54 (TLVTPSTVKKSSDVASTSKK) has biased composition (polar residues). Over residues 84 to 108 (SEEEEEDEPSSDSESGSESESDTEA) the composition is skewed to acidic residues. Residues 122–143 (NEKRQSEGKPEEERAKTETETG) are compositionally biased toward basic and acidic residues.

Belongs to the GeBP family.

In Arabidopsis thaliana (Mouse-ear cress), this protein is Probable transcription factor At4g00610.